Reading from the N-terminus, the 108-residue chain is UPF0060 membrane protein RSKD131_0092 (108 aa).

Helical transmembrane passes span 5 to 25 (LAAY…VWAW), 32 to 52 (ALWL…LALT), 62 to 82 (AVYG…VEGV), and 86 to 106 (RWDM…LWAP).

The protein belongs to the UPF0060 family.

The protein resides in the cell inner membrane. In Cereibacter sphaeroides (strain KD131 / KCTC 12085) (Rhodobacter sphaeroides), this protein is UPF0060 membrane protein RSKD131_0092.